A 621-amino-acid polypeptide reads, in one-letter code: Frizzled and smoothened-like protein H (621 aa).

Positions 1–21 (MNLKFYNLIFFISFLICCIHG) are cleaved as a signal peptide. Topologically, residues 22–246 (QRYLPVEGGK…VWNQIFKIND (225 aa)) are extracellular. The region spanning 27–166 (VEGGKCEKYI…IEWVKYNLTI (140 aa)) is the FZ domain. 2 disulfides stabilise this stretch: C32/C103 and C46/C96. N-linked (GlcNAc...) asparagine glycans are attached at residues N60, N107, N163, N176, and N206. Residues 247–267 (VLSSISLACTLILLFTFGILN) form a helical membrane-spanning segment. At 268–277 (PKLNRFDKKN) the chain is on the cytoplasmic side. A helical transmembrane segment spans residues 278-298 (LFFIAGVFGMSVSGVLIAANG). At 299 to 318 (SEKTVCPTPERYAVNTDRVC) the chain is on the extracellular side. A helical transmembrane segment spans residues 319–339 (VASGFLVHFSALFAILWWTIG). Residues 340-359 (LADVYYGIKFVGKKIKIKVR) are Cytoplasmic-facing. The chain crosses the membrane as a helical span at residues 360 to 380 (YYLLATLTISLAFTLVPLGTG). Residues 381–400 (QYQAGLSNVMCFLKDEIYQS) are Extracellular-facing. The chain crosses the membrane as a helical span at residues 401–421 (MTFFVPLGICLTMGTILMILV). At 422-464 (MREIYVIVKSNSTSSSFSSSSSKSKSKSKSSDSISYLKLQVKP) the chain is on the cytoplasmic side. A helical membrane pass occupies residues 465 to 485 (MLNIILFYFTFLYLFLFVRVI). At 486–520 (NSRYQEYEDSAIPYMLCLAKGGGDSCRLKGPSAGS) the chain is on the extracellular side. Residues 521–541 (LGYFAYCLRIYGIYLFIISFL) form a helical membrane-spanning segment. Over 542-621 (SSRTIKIWKE…RNYNTDDDDL (80 aa)) the chain is Cytoplasmic. The segment covering 575–594 (FSSSKNTSTTQNSTLNNTES) has biased composition (low complexity). Residues 575-603 (FSSSKNTSTTQNSTLNNTESDTSKRGNSS) form a disordered region.

It belongs to the G-protein coupled receptor Fz/Smo family.

It is found in the membrane. The protein is Frizzled and smoothened-like protein H (fslH) of Dictyostelium discoideum (Social amoeba).